The chain runs to 145 residues: Large ribosomal subunit protein uL16 (145 aa).

The protein belongs to the universal ribosomal protein uL16 family. As to quaternary structure, part of the 50S ribosomal subunit.

Binds 23S rRNA and is also seen to make contacts with the A and possibly P site tRNAs. The sequence is that of Large ribosomal subunit protein uL16 from Lactobacillus johnsonii (strain CNCM I-12250 / La1 / NCC 533).